Reading from the N-terminus, the 618-residue chain is Dihydroxy-acid dehydratase (618 aa).

Asp81 contributes to the Mg(2+) binding site. Cys122 provides a ligand contact to [2Fe-2S] cluster. Mg(2+)-binding residues include Asp123 and Lys124. An N6-carboxylysine modification is found at Lys124. Cys195 provides a ligand contact to [2Fe-2S] cluster. Glu491 lines the Mg(2+) pocket. The Proton acceptor role is filled by Ser517.

The protein belongs to the IlvD/Edd family. In terms of assembly, homodimer. It depends on [2Fe-2S] cluster as a cofactor. The cofactor is Mg(2+).

The enzyme catalyses (2R)-2,3-dihydroxy-3-methylbutanoate = 3-methyl-2-oxobutanoate + H2O. The catalysed reaction is (2R,3R)-2,3-dihydroxy-3-methylpentanoate = (S)-3-methyl-2-oxopentanoate + H2O. Its pathway is amino-acid biosynthesis; L-isoleucine biosynthesis; L-isoleucine from 2-oxobutanoate: step 3/4. It participates in amino-acid biosynthesis; L-valine biosynthesis; L-valine from pyruvate: step 3/4. In terms of biological role, functions in the biosynthesis of branched-chain amino acids. Catalyzes the dehydration of (2R,3R)-2,3-dihydroxy-3-methylpentanoate (2,3-dihydroxy-3-methylvalerate) into 2-oxo-3-methylpentanoate (2-oxo-3-methylvalerate) and of (2R)-2,3-dihydroxy-3-methylbutanoate (2,3-dihydroxyisovalerate) into 2-oxo-3-methylbutanoate (2-oxoisovalerate), the penultimate precursor to L-isoleucine and L-valine, respectively. The chain is Dihydroxy-acid dehydratase from Rhodopseudomonas palustris (strain TIE-1).